A 90-amino-acid chain; its full sequence is MARMVQCIKLNKEAEGLDFPPLPGELGKKIWQSVSKEAWAGWLKHQTMLINENRLNMADARARQYLLKQTEKYFFGEGADQAQGYVPPQS.

It belongs to the Fe(2+)-trafficking protein family.

Functionally, could be a mediator in iron transactions between iron acquisition and iron-requiring processes, such as synthesis and/or repair of Fe-S clusters in biosynthetic enzymes. The protein is Probable Fe(2+)-trafficking protein of Cupriavidus necator (strain ATCC 17699 / DSM 428 / KCTC 22496 / NCIMB 10442 / H16 / Stanier 337) (Ralstonia eutropha).